The sequence spans 361 residues: Methylthioribose-1-phosphate isomerase (361 aa).

Asp245 acts as the Proton donor in catalysis.

It belongs to the eIF-2B alpha/beta/delta subunits family. MtnA subfamily.

It is found in the cytoplasm. It localises to the nucleus. It carries out the reaction 5-(methylsulfanyl)-alpha-D-ribose 1-phosphate = 5-(methylsulfanyl)-D-ribulose 1-phosphate. It participates in amino-acid biosynthesis; L-methionine biosynthesis via salvage pathway; L-methionine from S-methyl-5-thio-alpha-D-ribose 1-phosphate: step 1/6. Its function is as follows. Catalyzes the interconversion of methylthioribose-1-phosphate (MTR-1-P) into methylthioribulose-1-phosphate (MTRu-1-P). The chain is Methylthioribose-1-phosphate isomerase from Monosiga brevicollis (Choanoflagellate).